Here is an 885-residue protein sequence, read N- to C-terminus: DNA replication licensing factor REC (885 aa).

A disordered region spans residues 36-76 (RVIPAGGNRQPNQGEPGAPDAPSVPPATRQPRGWSRTAGKR). The C4-type zinc finger occupies 281 to 308 (CSRCQMEIAMRQRGTFQPRPYQCKRSEC). Residues 430–627 (SFKLLVQSIA…ERDMSLTAHV (198 aa)) form the MCM domain. 473 to 480 (GDPGIGKT) contributes to the ATP binding site. A compositionally biased stretch (polar residues) spans 796-805 (SLKEGSSRQG). Positions 796–818 (SLKEGSSRQGTRGGGGAGGGAGK) are disordered. Gly residues predominate over residues 806–817 (TRGGGGAGGGAG).

It belongs to the MCM family.

It is found in the nucleus. Its function is as follows. Required for meiotic DNA recombination in females. Probably not involved in DNA repair and recombination in somatic cells. The sequence is that of DNA replication licensing factor REC (rec) from Drosophila melanogaster (Fruit fly).